The primary structure comprises 98 residues: Cystatin-B (98 aa).

At M1 the chain carries N-acetylmethionine. The Secondary area of contact motif lies at 46-50 (QVVAG).

The protein belongs to the cystatin family. Able to form dimers stabilized by noncovalent forces.

The protein localises to the cytoplasm. It localises to the nucleus. Its function is as follows. This is an intracellular thiol proteinase inhibitor. Tightly binding reversible inhibitor of cathepsins L, H and B. This Pongo pygmaeus (Bornean orangutan) protein is Cystatin-B (CSTB).